Here is a 342-residue protein sequence, read N- to C-terminus: Anthranilate phosphoribosyltransferase (342 aa).

5-phospho-alpha-D-ribose 1-diphosphate is bound by residues Gly-83, 86–87 (GD), Thr-91, 93–96 (NVST), 111–119 (KHGNRSVSG), and Ser-123. Gly-83 serves as a coordination point for anthranilate. Position 95 (Ser-95) interacts with Mg(2+). Position 114 (Asn-114) interacts with anthranilate. Arg-169 provides a ligand contact to anthranilate. Asp-228 and Glu-229 together coordinate Mg(2+).

Belongs to the anthranilate phosphoribosyltransferase family. In terms of assembly, homodimer. Requires Mg(2+) as cofactor.

The catalysed reaction is N-(5-phospho-beta-D-ribosyl)anthranilate + diphosphate = 5-phospho-alpha-D-ribose 1-diphosphate + anthranilate. Its pathway is amino-acid biosynthesis; L-tryptophan biosynthesis; L-tryptophan from chorismate: step 2/5. In terms of biological role, catalyzes the transfer of the phosphoribosyl group of 5-phosphorylribose-1-pyrophosphate (PRPP) to anthranilate to yield N-(5'-phosphoribosyl)-anthranilate (PRA). The polypeptide is Anthranilate phosphoribosyltransferase (Halorhodospira halophila (strain DSM 244 / SL1) (Ectothiorhodospira halophila (strain DSM 244 / SL1))).